The sequence spans 553 residues: Solute carrier family 22 member 12 (553 aa).

Residues 16-36 (FQLLQAVALVTPILWVTTQNM) traverse the membrane as a helical segment. Residues asparagine 56, asparagine 102, and asparagine 107 are each glycosylated (N-linked (GlcNAc...) asparagine). 11 consecutive transmembrane segments (helical) span residues 146 to 166 (PMAQSIFLAGILVGAAVCGHA), 182 to 202 (LVSVSGTIAALMPTFPLYCLF), 204 to 224 (FLVASAVAGVMMNTASLLMEW), 232 to 252 (LMMTLNALGFSFGQVLTGSVA), 260 to 280 (MLQLAVSAPFFLFFVYSWWLP), 351 to 371 (FISMLCWFAFGFTFYGLALDL), 378 to 398 (IFLLQALIGIVDLPVKMGSLL), 407 to 427 (LCQASSLVLPGLCILANILVP), 435 to 455 (SSLAVLGLGSLGAAFTCVTIF), 466 to 486 (MTAVGLGQVAARGGAMLGPLV), and 495 to 515 (WLPLLVYGVVPVLSGLAALLL). The residue at position 534 (serine 534) is a Phosphoserine.

This sequence belongs to the major facilitator (TC 2.A.1) superfamily. Organic cation transporter (TC 2.A.1.19) family. Interacts with PDZK1. Post-translationally, N-glycosylated. As to expression, expressed in the proximal tubular epithelial cells in kidney.

The protein localises to the apical cell membrane. It catalyses the reaction urate(out) + (S)-lactate(in) = urate(in) + (S)-lactate(out). It carries out the reaction nicotinate(in) + urate(out) = nicotinate(out) + urate(in). The enzyme catalyses urate(out) + n chloride(in) = urate(in) + n chloride(out). The catalysed reaction is orotate(out) + nicotinate(in) = orotate(in) + nicotinate(out). Functionally, electroneutral antiporter that translocates urate across the apical membrane of proximal tubular cells in exchange for monovalent organic or inorganic anions. Involved in renal reabsorption of urate and helps maintaining blood levels of uric acid. Mediates urate uptake by an exchange with organic anions such as (S)-lactate and nicotinate, and inorganic anion Cl(-). Other inorganic anions such as Br(-), I(-) and NO3(-) may also act as counteranions that exchange for urate. Also mediates orotate tubular uptake coupled with nicotinate efflux and to a lesser extent with lactate efflux, therefore displaying a potential role in orotate renal reabsorption. Orotate transport is Cl(-)-dependent. In Rattus norvegicus (Rat), this protein is Solute carrier family 22 member 12 (Slc22a12).